The chain runs to 176 residues: Prenylated Rab acceptor 1 (176 aa).

Position 1 is an N-acetylmethionine (M1). Residues 11–13 (SRF) carry the SKL peroxisome targeting motif motif. A Phosphoserine modification is found at S18. Helical transmembrane passes span 84–104 (LLTN…IVGI) and 129–149 (VCVA…LWLI).

The protein belongs to the PRA1 family. In terms of assembly, interacts with YIP1 and the Rab GTPases SEC4, YPT1, YPT6, YPT10, YPT11, YPT31, YPT32 and YPT52.

The protein resides in the golgi apparatus membrane. It is found in the peroxisome membrane. The chain is Prenylated Rab acceptor 1 (YIP3) from Saccharomyces cerevisiae (strain ATCC 204508 / S288c) (Baker's yeast).